Here is a 571-residue protein sequence, read N- to C-terminus: Proline--tRNA ligase (571 aa).

The protein belongs to the class-II aminoacyl-tRNA synthetase family. ProS type 1 subfamily. In terms of assembly, homodimer.

Its subcellular location is the cytoplasm. It carries out the reaction tRNA(Pro) + L-proline + ATP = L-prolyl-tRNA(Pro) + AMP + diphosphate. In terms of biological role, catalyzes the attachment of proline to tRNA(Pro) in a two-step reaction: proline is first activated by ATP to form Pro-AMP and then transferred to the acceptor end of tRNA(Pro). As ProRS can inadvertently accommodate and process non-cognate amino acids such as alanine and cysteine, to avoid such errors it has two additional distinct editing activities against alanine. One activity is designated as 'pretransfer' editing and involves the tRNA(Pro)-independent hydrolysis of activated Ala-AMP. The other activity is designated 'posttransfer' editing and involves deacylation of mischarged Ala-tRNA(Pro). The misacylated Cys-tRNA(Pro) is not edited by ProRS. This chain is Proline--tRNA ligase, found in Shewanella baltica (strain OS155 / ATCC BAA-1091).